A 39-amino-acid polypeptide reads, in one-letter code: Conotoxin Cl14.5 (39 aa).

The propeptide occupies Pro-1–Gly-16. Position 38 is a proline amide (Pro-38).

Contains 2 disulfide bonds. Expressed by the venom duct.

It localises to the secreted. The sequence is that of Conotoxin Cl14.5 from Californiconus californicus (California cone).